A 433-amino-acid chain; its full sequence is Adenylosuccinate synthetase (433 aa).

Residues 12–18 and 40–42 contribute to the GTP site; these read GDEGKGK and GHT. Residue Asp13 is the Proton acceptor of the active site. Residues Asp13 and Gly40 each contribute to the Mg(2+) site. IMP contacts are provided by residues 13-16, 38-41, Thr130, Arg144, Gln225, Thr240, and Arg304; these read DEGK and NAGH. Residue His41 is the Proton donor of the active site. 300–306 lines the substrate pocket; that stretch reads ATTGRPR. GTP-binding positions include Arg306, 332-334, and 414-416; these read KLD and SIG.

This sequence belongs to the adenylosuccinate synthetase family. In terms of assembly, homodimer. Mg(2+) serves as cofactor.

Its subcellular location is the cytoplasm. It carries out the reaction IMP + L-aspartate + GTP = N(6)-(1,2-dicarboxyethyl)-AMP + GDP + phosphate + 2 H(+). It participates in purine metabolism; AMP biosynthesis via de novo pathway; AMP from IMP: step 1/2. Functionally, plays an important role in the de novo pathway of purine nucleotide biosynthesis. Catalyzes the first committed step in the biosynthesis of AMP from IMP. This is Adenylosuccinate synthetase from Geobacter sulfurreducens (strain ATCC 51573 / DSM 12127 / PCA).